Reading from the N-terminus, the 765-residue chain is Glucosamine inositolphosphorylceramide transferase 1 (765 aa).

Transmembrane regions (helical) follow at residues 43-63, 394-414, and 476-496; these read FFAS…WFVF, VILG…LGFL, and MGKF…CVGV. Residues N553, 577-582, 598-600, R628, and 683-687 each bind substrate; these read NSLNNR, DDD, and FNCED. Position 600 (D600) interacts with Mn(2+). A disulfide bridge links C685 with C738. D687 is a catalytic residue.

The protein belongs to the glycosyltransferase 64 family. Mn(2+) serves as cofactor. In terms of tissue distribution, specifically and highly expressed in developing embryos and mature seeds. Also detected at low levels in stigma and pollen.

Its subcellular location is the membrane. It catalyses the reaction an N-(2R-hydroxy-very-long-chain fatty acyl)-(R)-4-hydroxysphingoid base + a 1,2-diacyl-sn-glycero-3-phospho-(1D-myo-inositol) = a 1D-myo-inositol-1-phospho-N-[(R)-2-hydroxy-very-long-chain fatty acyl]-(R)-4-hydroxysphingoid base + a 1,2-diacyl-sn-glycerol. Its pathway is sphingolipid metabolism. In terms of biological role, glycosyltransferase that mediates the glycosylation of glycosylinositol phosphorylceramides (GIPCs), the major sphingolipids in the plasma membrane; acts as a HexN(Ac)-specific GIPC sugar transferase and accepts glucosamine (GlcN) and N-acetylglucosamine (GlcNAc) as the sugar unit. Responsible for the glycosylation of a subgroup of GIPCs found in seeds and pollen that contain GlcNAc and GlcN (GlcN(Ac)). Maybe involved in the maintenance of cell-cell adhesion. This Arabidopsis thaliana (Mouse-ear cress) protein is Glucosamine inositolphosphorylceramide transferase 1.